Reading from the N-terminus, the 232-residue chain is Orotidine 5'-phosphate decarboxylase (232 aa).

Substrate is bound by residues D13, K35, 62–71 (DLKFHDIPNT), T122, R182, Q191, G211, and R212. The Proton donor role is filled by K64.

It belongs to the OMP decarboxylase family. Type 1 subfamily. As to quaternary structure, homodimer.

The catalysed reaction is orotidine 5'-phosphate + H(+) = UMP + CO2. It participates in pyrimidine metabolism; UMP biosynthesis via de novo pathway; UMP from orotate: step 2/2. In terms of biological role, catalyzes the decarboxylation of orotidine 5'-monophosphate (OMP) to uridine 5'-monophosphate (UMP). This chain is Orotidine 5'-phosphate decarboxylase, found in Pseudomonas fluorescens (strain SBW25).